The sequence spans 171 residues: Nicotinamide-nucleotide adenylyltransferase (171 aa).

Belongs to the archaeal NMN adenylyltransferase family.

The protein localises to the cytoplasm. The catalysed reaction is beta-nicotinamide D-ribonucleotide + ATP + H(+) = diphosphate + NAD(+). Its pathway is cofactor biosynthesis; NAD(+) biosynthesis; NAD(+) from nicotinamide D-ribonucleotide: step 1/1. The protein is Nicotinamide-nucleotide adenylyltransferase of Methanococcus maripaludis (strain C5 / ATCC BAA-1333).